The sequence spans 72 residues: Large ribosomal subunit protein uL29 (72 aa).

The protein belongs to the universal ribosomal protein uL29 family. In terms of assembly, part of the 50S ribosomal subunit.

In Pyrococcus furiosus (strain ATCC 43587 / DSM 3638 / JCM 8422 / Vc1), this protein is Large ribosomal subunit protein uL29.